The chain runs to 118 residues: Phosphoribosyl-AMP cyclohydrolase (118 aa).

Aspartate 87 is a Mg(2+) binding site. A Zn(2+)-binding site is contributed by cysteine 88. Mg(2+) contacts are provided by aspartate 89 and aspartate 91. Residues cysteine 104 and cysteine 111 each coordinate Zn(2+).

Belongs to the PRA-CH family. Homodimer. Mg(2+) is required as a cofactor. Requires Zn(2+) as cofactor.

The protein resides in the cytoplasm. The enzyme catalyses 1-(5-phospho-beta-D-ribosyl)-5'-AMP + H2O = 1-(5-phospho-beta-D-ribosyl)-5-[(5-phospho-beta-D-ribosylamino)methylideneamino]imidazole-4-carboxamide. Its pathway is amino-acid biosynthesis; L-histidine biosynthesis; L-histidine from 5-phospho-alpha-D-ribose 1-diphosphate: step 3/9. Its function is as follows. Catalyzes the hydrolysis of the adenine ring of phosphoribosyl-AMP. The polypeptide is Phosphoribosyl-AMP cyclohydrolase (Corynebacterium glutamicum (strain R)).